Consider the following 155-residue polypeptide: Small ribosomal subunit protein uS7cz/uS7cy (155 aa).

It belongs to the universal ribosomal protein uS7 family. In terms of assembly, part of the 30S ribosomal subunit.

It localises to the plastid. Its subcellular location is the chloroplast. Functionally, one of the primary rRNA binding proteins, it binds directly to 16S rRNA where it nucleates assembly of the head domain of the 30S subunit. This Chloranthus spicatus (Chulantree) protein is Small ribosomal subunit protein uS7cz/uS7cy (rps7-A).